Here is a 276-residue protein sequence, read N- to C-terminus: Large ribosomal subunit protein uL2 (276 aa).

Disordered stretches follow at residues 29–54 (PEKS…SRRR) and 224–276 (AMNP…RGQR). Basic residues predominate over residues 256–276 (YKTRSKKKPSSKLIVKRRGQR).

It belongs to the universal ribosomal protein uL2 family. In terms of assembly, part of the 50S ribosomal subunit. Forms a bridge to the 30S subunit in the 70S ribosome.

Its function is as follows. One of the primary rRNA binding proteins. Required for association of the 30S and 50S subunits to form the 70S ribosome, for tRNA binding and peptide bond formation. It has been suggested to have peptidyltransferase activity; this is somewhat controversial. Makes several contacts with the 16S rRNA in the 70S ribosome. This chain is Large ribosomal subunit protein uL2, found in Maridesulfovibrio salexigens (strain ATCC 14822 / DSM 2638 / NCIMB 8403 / VKM B-1763) (Desulfovibrio salexigens).